Here is a 412-residue protein sequence, read N- to C-terminus: Inositol polyphosphate-5-phosphatase A (412 aa).

The S-farnesyl cysteine moiety is linked to residue Cys-409. The propeptide at 410–412 is removed in mature form; that stretch reads VVQ.

The protein belongs to the inositol 1,4,5-trisphosphate 5-phosphatase type I family. Interacts with TASOR. Isoprenylation at Cys-409 is required for localization at the membrane. In terms of tissue distribution, expressed at high levels in cerebellar Purkinje cells (at protein level). Expressed in Sertoli cells of the testis.

The protein localises to the cell membrane. It is found in the cell projection. Its subcellular location is the dendrite. It carries out the reaction 1D-myo-inositol 1,4,5-trisphosphate + H2O = 1D-myo-inositol 1,4-bisphosphate + phosphate. It catalyses the reaction 1D-myo-inositol 1,3,4,5-tetrakisphosphate + H2O = 1D-myo-inositol 1,3,4-trisphosphate + phosphate. In terms of biological role, phosphatase that specifically hydrolyzes the 5-phosphate of inositol 1,4,5-trisphosphate to inositol 1,4-bisphosphate, and inositol 1,3,4,5-tetrasphosphate to inositol 1,3,4-trisphosphate. Plays a crucial role in the survival of cerebellar Purkinje cells. This chain is Inositol polyphosphate-5-phosphatase A (Inpp5a), found in Mus musculus (Mouse).